The following is a 365-amino-acid chain: Succinyl-diaminopimelate desuccinylase (365 aa).

H65 serves as a coordination point for Zn(2+). The active site involves D67. D96 contacts Zn(2+). The active-site Proton acceptor is the E126. 3 residues coordinate Zn(2+): E127, E155, and H340.

This sequence belongs to the peptidase M20A family. DapE subfamily. Homodimer. Requires Zn(2+) as cofactor. The cofactor is Co(2+).

It catalyses the reaction N-succinyl-(2S,6S)-2,6-diaminopimelate + H2O = (2S,6S)-2,6-diaminopimelate + succinate. The protein operates within amino-acid biosynthesis; L-lysine biosynthesis via DAP pathway; LL-2,6-diaminopimelate from (S)-tetrahydrodipicolinate (succinylase route): step 3/3. Catalyzes the hydrolysis of N-succinyl-L,L-diaminopimelic acid (SDAP), forming succinate and LL-2,6-diaminopimelate (DAP), an intermediate involved in the bacterial biosynthesis of lysine and meso-diaminopimelic acid, an essential component of bacterial cell walls. The chain is Succinyl-diaminopimelate desuccinylase from Campylobacter jejuni subsp. doylei (strain ATCC BAA-1458 / RM4099 / 269.97).